We begin with the raw amino-acid sequence, 328 residues long: Methionyl-tRNA formyltransferase (328 aa).

121 to 124 (SLLP) contributes to the (6S)-5,6,7,8-tetrahydrofolate binding site.

It belongs to the Fmt family.

The catalysed reaction is L-methionyl-tRNA(fMet) + (6R)-10-formyltetrahydrofolate = N-formyl-L-methionyl-tRNA(fMet) + (6S)-5,6,7,8-tetrahydrofolate + H(+). Its function is as follows. Attaches a formyl group to the free amino group of methionyl-tRNA(fMet). The formyl group appears to play a dual role in the initiator identity of N-formylmethionyl-tRNA by promoting its recognition by IF2 and preventing the misappropriation of this tRNA by the elongation apparatus. The chain is Methionyl-tRNA formyltransferase from Paraburkholderia xenovorans (strain LB400).